A 386-amino-acid chain; its full sequence is Succinate--CoA ligase [ADP-forming] subunit beta (386 aa).

The ATP-grasp domain occupies 9-237 (KEVLRDFGVN…LSAEHPLEVE (229 aa)). ATP contacts are provided by residues K45, 52 to 54 (GRG), V94, and E101. Mg(2+)-binding residues include N192 and D206. Substrate is bound by residues N258 and 315–317 (GIT).

The protein belongs to the succinate/malate CoA ligase beta subunit family. As to quaternary structure, heterotetramer of two alpha and two beta subunits. It depends on Mg(2+) as a cofactor.

The enzyme catalyses succinate + ATP + CoA = succinyl-CoA + ADP + phosphate. The catalysed reaction is GTP + succinate + CoA = succinyl-CoA + GDP + phosphate. It functions in the pathway carbohydrate metabolism; tricarboxylic acid cycle; succinate from succinyl-CoA (ligase route): step 1/1. Its function is as follows. Succinyl-CoA synthetase functions in the citric acid cycle (TCA), coupling the hydrolysis of succinyl-CoA to the synthesis of either ATP or GTP and thus represents the only step of substrate-level phosphorylation in the TCA. The beta subunit provides nucleotide specificity of the enzyme and binds the substrate succinate, while the binding sites for coenzyme A and phosphate are found in the alpha subunit. The polypeptide is Succinate--CoA ligase [ADP-forming] subunit beta (Deinococcus radiodurans (strain ATCC 13939 / DSM 20539 / JCM 16871 / CCUG 27074 / LMG 4051 / NBRC 15346 / NCIMB 9279 / VKM B-1422 / R1)).